Reading from the N-terminus, the 758-residue chain is Glucocorticoid receptor (758 aa).

2 disordered regions span residues 1-61 (MDPG…SANG) and 349-382 (GMSS…PSGP). Positions 1-386 (MDPGGLKHSK…AKPSGPTHKI (386 aa)) are modulating. Residues 26–42 (GSFSGDTGGSKSTTSTS) show a composition bias toward low complexity. 2 NR C4-type zinc fingers span residues 387 to 407 (CLVC…CGSC) and 432 to 456 (CAGR…FRKC). A DNA-binding region (nuclear receptor) is located at residues 387–461 (CLVCSDEASG…RFRKCLQAGM (75 aa)). Residues 462-498 (NLEARKNKKLIRLKGQQTTMEPNPPPPDERACALIPK) form a hinge region. The NR LBD domain occupies 499–733 (SMPQLVPTML…FPEMLAEIIS (235 aa)).

It belongs to the nuclear hormone receptor family. NR3 subfamily. Heteromultimeric cytoplasmic complex with HSP90AA1, HSPA1A/HSPA1B, and FKBP5 or another immunophilin such as PPID, STIP1, or the immunophilin homolog PPP5C. Upon ligand binding FKBP5 dissociates from the complex and FKBP4 takes its place, thereby linking the complex to dynein and mediating transport to the nucleus, where the complex dissociates. Directly interacts with UNC45A. Binds to DNA as a homodimer, and as heterodimer with NR3C2 or the retinoid X receptor. Binds STAT5A and STAT5B homodimers and heterodimers. Interacts with NRIP1, POU2F1, POU2F2 and TRIM28. Interacts with several coactivator complexes, including the SMARCA4 complex, CREBBP/EP300, TADA2L (Ada complex) and p160 coactivators such as NCOA2 and NCOA6. Interaction with BAG1 inhibits transactivation. Interacts with HEXIM1, PELP1 and TGFB1I1. Interacts with NCOA1, NCOA3, SMARCA4, SMARCC1, SMARCD1, and SMARCE1. Post-translationally, phosphorylated in the absence of hormone; becomes hyperphosphorylated in the presence of glucocorticoids. May be dephosphorylated by PPP5C, attenuates NR3C1 action. Isoform 1 is expressed in all tissues tested including liver, gills, intestine, skeletal muscle, kidney, heart, spleen, stomach, brain, pituitary, ovary, testis, skin and bladder. Isoform 2 is found only in testis.

The protein resides in the cytoplasm. The protein localises to the nucleus. Its subcellular location is the mitochondrion. It localises to the cytoskeleton. It is found in the spindle. The protein resides in the microtubule organizing center. The protein localises to the centrosome. In terms of biological role, receptor for glucocorticoids (GC). Has a dual mode of action: as a transcription factor that binds to glucocorticoid response elements (GRE), both for nuclear and mitochondrial DNA, and as a modulator of other transcription factors. Affects inflammatory responses, cellular proliferation and differentiation in target tissues. Involved in chromatin remodeling. Plays a role in rapid mRNA degradation by binding to the 5' UTR of target mRNAs and interacting with PNRC2 in a ligand-dependent manner which recruits the RNA helicase UPF1 and the mRNA-decapping enzyme DCP1A, leading to RNA decay. Could act as a coactivator for STAT5-dependent transcription upon growth hormone (GH) stimulation and could reveal an essential role of hepatic GR in the control of body growth. Mediates glucocorticoid-induced apoptosis. Promotes accurate chromosome segregation during mitosis. May act as a tumor suppressor. May play a negative role in adipogenesis through the regulation of lipolytic and antilipogenic gene expression. The polypeptide is Glucocorticoid receptor (nr3c1) (Oncorhynchus mykiss (Rainbow trout)).